The primary structure comprises 291 residues: 4-diphosphocytidyl-2-C-methyl-D-erythritol kinase (291 aa).

The active site involves Lys-10. 94 to 104 (PVSAGLAGGSS) serves as a coordination point for ATP. Residue Asp-136 is part of the active site.

This sequence belongs to the GHMP kinase family. IspE subfamily.

The enzyme catalyses 4-CDP-2-C-methyl-D-erythritol + ATP = 4-CDP-2-C-methyl-D-erythritol 2-phosphate + ADP + H(+). It participates in isoprenoid biosynthesis; isopentenyl diphosphate biosynthesis via DXP pathway; isopentenyl diphosphate from 1-deoxy-D-xylulose 5-phosphate: step 3/6. In terms of biological role, catalyzes the phosphorylation of the position 2 hydroxy group of 4-diphosphocytidyl-2C-methyl-D-erythritol. The sequence is that of 4-diphosphocytidyl-2-C-methyl-D-erythritol kinase from Listeria monocytogenes serotype 4a (strain HCC23).